We begin with the raw amino-acid sequence, 612 residues long: DNA mismatch repair protein MutL (612 aa).

Belongs to the DNA mismatch repair MutL/HexB family.

Functionally, this protein is involved in the repair of mismatches in DNA. It is required for dam-dependent methyl-directed DNA mismatch repair. May act as a 'molecular matchmaker', a protein that promotes the formation of a stable complex between two or more DNA-binding proteins in an ATP-dependent manner without itself being part of a final effector complex. The polypeptide is DNA mismatch repair protein MutL (Herminiimonas arsenicoxydans).